Consider the following 107-residue polypeptide: Ferredoxin 1 (107 aa).

2 consecutive 4Fe-4S ferredoxin-type domains span residues 2–30 (TFVV…YEGP) and 31–60 (NFLV…SEDE). [3Fe-4S] cluster is bound by residues C9 and C17. C21, C40, C43, and C46 together coordinate [4Fe-4S] cluster. C50 is a binding site for [3Fe-4S] cluster.

[4Fe-4S] cluster serves as cofactor. [3Fe-4S] cluster is required as a cofactor.

Functionally, ferredoxins are iron-sulfur proteins that transfer electrons in a wide variety of metabolic reactions. The sequence is that of Ferredoxin 1 (fdxA) from Pseudomonas putida (strain ATCC 47054 / DSM 6125 / CFBP 8728 / NCIMB 11950 / KT2440).